Reading from the N-terminus, the 369-residue chain is Homoserine O-acetyltransferase (369 aa).

The region spanning 44–350 (NAILVAHAWT…AYGHDAFLLE (307 aa)) is the AB hydrolase-1 domain. The Nucleophile role is filled by serine 150. Arginine 217 serves as a coordination point for substrate. Residues aspartate 311 and histidine 344 contribute to the active site. Position 345 (aspartate 345) interacts with substrate.

This sequence belongs to the AB hydrolase superfamily. MetX family. In terms of assembly, homodimer.

The protein localises to the cytoplasm. It carries out the reaction L-homoserine + acetyl-CoA = O-acetyl-L-homoserine + CoA. Its pathway is amino-acid biosynthesis; L-methionine biosynthesis via de novo pathway; O-acetyl-L-homoserine from L-homoserine: step 1/1. Transfers an acetyl group from acetyl-CoA to L-homoserine, forming acetyl-L-homoserine. In Geobacter metallireducens (strain ATCC 53774 / DSM 7210 / GS-15), this protein is Homoserine O-acetyltransferase.